The following is a 290-amino-acid chain: Undecaprenyl-diphosphatase (290 aa).

8 helical membrane-spanning segments follow: residues 5–25 (IGIF…YFPI), 44–64 (GTAY…TYFY), 88–108 (VRLF…GLAL), 122–142 (LSVI…SESL), 152–172 (IRVI…VPGV), 195–215 (FSFL…LKVL), 226–246 (PIVA…AWLL), and 255–275 (LVFV…LAAG).

It belongs to the UppP family.

The protein resides in the cell inner membrane. The enzyme catalyses di-trans,octa-cis-undecaprenyl diphosphate + H2O = di-trans,octa-cis-undecaprenyl phosphate + phosphate + H(+). Its function is as follows. Catalyzes the dephosphorylation of undecaprenyl diphosphate (UPP). Confers resistance to bacitracin. The polypeptide is Undecaprenyl-diphosphatase (Gloeobacter violaceus (strain ATCC 29082 / PCC 7421)).